The chain runs to 249 residues: DnaJ homolog subfamily C member 5 homolog (249 aa).

At serine 12 the chain carries Phosphoserine. Threonine 13 is modified (phosphothreonine). Residues serine 14 and serine 17 each carry the phosphoserine modification. One can recognise a J domain in the interval 15-84 (GDSLYEILGL…RNIYDNYGSL (70 aa)). Tyrosine 19 is subject to Phosphotyrosine. A compositionally biased stretch (basic and acidic residues) spans 146 to 162 (HDQYSHLNRPDGNREGN). Disordered stretches follow at residues 146 to 177 (HDQY…LEDV) and 218 to 249 (PFTG…NQKY). Residues 227–241 (NENTSLNTTEQTTYT) show a composition bias toward polar residues.

In terms of processing, fatty acylated. Heavily palmitoylated in the cysteine string motif. As to expression, expressed in wide range of synaptic terminals: embryonic nervous system, larval neuromuscular junctions, adult visual system (neuropil of optic ganglia and terminal of R1-8 photoreceptors) and thoracic neuromuscular junctions. Also expressed in non-neuronal cells: follicle cells, spermatheca, testis and ejaculatory bulb. Low level of expression is found in many neuronal and non-neuronal tissues.

Its subcellular location is the membrane. Its function is as follows. May have an important role in presynaptic function. This chain is DnaJ homolog subfamily C member 5 homolog, found in Drosophila melanogaster (Fruit fly).